We begin with the raw amino-acid sequence, 360 residues long: C-C chemokine receptor type 4 (360 aa).

Topologically, residues 1–39 (MNATEVTDTTQDETVYNSYYFYESMPKPCTKEGIKAFGE) are extracellular. An N-linked (GlcNAc...) asparagine glycan is attached at Asn-2. The chain crosses the membrane as a helical span at residues 40-67 (VFLPPLYSLVFLLGLFGNSVVVLVLFKY). The Cytoplasmic portion of the chain corresponds to 68–77 (KRLKSMTDVY). The helical transmembrane segment at 78–98 (LLNLAISDLLFVLSLPFWGYY) threads the bilayer. Residues 99-111 (AADQWVFGLGLCK) are Extracellular-facing. An intrachain disulfide couples Cys-110 to Cys-187. A helical transmembrane segment spans residues 112–133 (IVSWMYLVGFYSGIFFIMLMSI). At 134-150 (DRYLAIVHAVFSLKART) the chain is on the cytoplasmic side. A helical membrane pass occupies residues 151–175 (LTYGVITSLITWSVAVFASLPGLLF). Topologically, residues 176 to 206 (STCYTEHNHTYCKTQYSVNSTTWKVLSSLEI) are extracellular. Residues Asn-183 and Asn-194 are each glycosylated (N-linked (GlcNAc...) asparagine). The helical transmembrane segment at 207-226 (NVLGLLIPLGIMLFCYSMII) threads the bilayer. Over 227 to 242 (RTLQHCKNEKKNRAVR) the chain is Cytoplasmic. Residues 243 to 267 (MIFAVVVLFLGFWTPYNVVLFLETL) traverse the membrane as a helical segment. Residues 268 to 284 (VELEVLQDCTLERYLDY) lie on the Extracellular side of the membrane. A helical transmembrane segment spans residues 285-308 (AIQATETLAFIHCCLNPVIYFFLG). At 309-360 (EKFRKYITQLFRTCRGPLVLCKHCDFLQVYSADMSSSSYTQSTVDHDFRDAL) the chain is on the cytoplasmic side.

It belongs to the G-protein coupled receptor 1 family. Post-translationally, in natural killer cells, CCL22 binding induces phosphorylation on yet undefined Ser/Thr residues, most probably by beta-adrenergic receptor kinases 1 and 2. Expressed in the thymus, macrophages and T- and B-cells.

Its subcellular location is the cell membrane. High affinity receptor for the C-C type chemokines CCL17/TARC and CCL22/MDC. The activity of this receptor is mediated by G(i) proteins which activate a phosphatidylinositol-calcium second messenger system. Could play a role in lipopolysaccharide (LPS)-induced endotoxic shock. In the CNS, could mediate hippocampal-neuron survival. The sequence is that of C-C chemokine receptor type 4 (Ccr4) from Mus musculus (Mouse).